The chain runs to 121 residues: Insertion element IS406 uncharacterized 13.3 kDa protein (121 aa).

The protein is Insertion element IS406 uncharacterized 13.3 kDa protein of Burkholderia multivorans (strain ATCC 17616 / 249).